Consider the following 610-residue polypeptide: MIQVLLVTISLAVFPYQGSSVILESGNVNDYEVVYPRKVTALPKGAVQPKYEDAMQYEFKVNGEPVVLHLEKNKGLFSEDYSETHYSPDGREITTYPPVEDHCYYHGRIENDADSTASISACNGLKGHFKLQGEMYLIEPLKLPDSEAHAVFKYENVEKEDEAPKMCGVTQNWESYEPIKKASQSNLTPEQQRYLNAKKYVKLFLVADYIMYLKYGRNLTAVRTRMYDIVNVITPIYHRMNIHVALVGLEIWSNTDKIIVQSSADVTLDLFAKWRATDLLSRKSHDNAQLLTGINFNGPTAGLGYLGGICNTMYSAGIVQDHSKIHHLVAIAMAHEMGHNLGMDHDKDTCTCGTRPCVMAGALSCEASFLFSDCSQKDHREFLIKNMPQCILKKPLKTDVVSPAVCGNYFVEVGEECDCGSPRTCRDPCCDATTCKLRQGAQCAEGLCCDQCRFKGAGTECRAAKDECDMADVCTGRSAECTDRFQRNGQPCKNNNGYCYNGKCPIMADQCIALFGPGATVSQDACFQFNREGNHYGYCRKEQNTKIACEPQDVKCGRLYCFPNSPENKNPCNIYYSPNDEDKGMVLPGTKCADRKACSNGQCVDVTTPY.

Positions 1–20 (MIQVLLVTISLAVFPYQGSS) are cleaved as a signal peptide. Residues 21–189 (VILESGNVND…KKASQSNLTP (169 aa)) constitute a propeptide that is removed on maturation. Glu190 is modified (pyrrolidone carboxylic acid (Glu)). The 197-residue stretch at 199–395 (KYVKLFLVAD…NMPQCILKKP (197 aa)) folds into the Peptidase M12B domain. The N-linked (GlcNAc...) asparagine glycan is linked to Asn218. 3 cysteine pairs are disulfide-bonded: Cys310/Cys390, Cys350/Cys374, and Cys352/Cys357. A Zn(2+)-binding site is contributed by His335. The Metal-binding motif lies at 335-346 (HEMGHNLGMDHD). Glu336 (proton acceptor) is an active-site residue. Positions 339 and 345 each coordinate Zn(2+). The region spanning 403–488 (PAVCGNYFVE…AECTDRFQRN (86 aa)) is the Disintegrin domain. Ca(2+) is bound by residues Val405, Asn408, Phe410, Glu412, Glu415, and Asp418. Cystine bridges form between Cys406-Cys435, Cys417-Cys430, Cys419-Cys425, Cys429-Cys452, Cys443-Cys449, Cys448-Cys474, Cys461-Cys481, Cys468-Cys499, Cys492-Cys504, Cys511-Cys561, Cys526-Cys572, Cys539-Cys549, Cys556-Cys598, and Cys592-Cys603. The short motif at 467–469 (ECD) is the D/ECD-tripeptide element. 5 residues coordinate Ca(2+): Asp469, Met470, Asp472, Asp483, and Arg484.

Belongs to the venom metalloproteinase (M12B) family. P-III subfamily. P-IIIc sub-subfamily. In terms of assembly, homodimer; disulfide-linked. It depends on Zn(2+) as a cofactor. In terms of processing, the N-terminus is blocked. Expressed by the venom gland.

The protein localises to the secreted. Inhibited by EDTA and EGTA, but not by PMSF. Zinc metalloprotease that has fibrinogenolytic and hemorrhagic activities. It induces apoptosis in vascular endothelial cells (VEC), without degrading extracellular matrix (it cannot cleave collagen) or inhibiting adhesion of VEC. VAP1-induced apoptosis is inhibited by antibodies for integrin alpha-3, alpha-6, beta-1 and CD9. Apoptosis is accompanied by severe cell fragmentation, which is controlled by caspases. The polypeptide is Zinc metalloproteinase-disintegrin-like VAP1 (Crotalus atrox (Western diamondback rattlesnake)).